A 626-amino-acid chain; its full sequence is tRNA uridine 5-carboxymethylaminomethyl modification enzyme MnmG (626 aa).

An FAD-binding site is contributed by 13–18 (GGGHAG). Residue 273-287 (GPRYCPSIEDKIHRF) participates in NAD(+) binding.

It belongs to the MnmG family. Homodimer. Heterotetramer of two MnmE and two MnmG subunits. It depends on FAD as a cofactor.

It is found in the cytoplasm. Its function is as follows. NAD-binding protein involved in the addition of a carboxymethylaminomethyl (cmnm) group at the wobble position (U34) of certain tRNAs, forming tRNA-cmnm(5)s(2)U34. The chain is tRNA uridine 5-carboxymethylaminomethyl modification enzyme MnmG from Acinetobacter baylyi (strain ATCC 33305 / BD413 / ADP1).